We begin with the raw amino-acid sequence, 441 residues long: uncharacterized protein (441 aa).

The first 23 residues, 1 to 23, serve as a signal peptide directing secretion; sequence MSRKYLLSLLLVGALVISVVASG. Cys24 carries the post-translational modification N-acetylcysteine. A lipid anchor (S-archaeol cysteine) is attached at Cys24.

The protein belongs to the bacterial solute-binding protein 1 family.

The protein resides in the cell membrane. Its function is as follows. Probably part of a binding-protein-dependent transport system PH1214/15/16. This is an uncharacterized protein from Pyrococcus horikoshii (strain ATCC 700860 / DSM 12428 / JCM 9974 / NBRC 100139 / OT-3).